We begin with the raw amino-acid sequence, 456 residues long: Exodeoxyribonuclease 7 large subunit (456 aa).

The protein belongs to the XseA family. In terms of assembly, heterooligomer composed of large and small subunits.

The protein localises to the cytoplasm. It carries out the reaction Exonucleolytic cleavage in either 5'- to 3'- or 3'- to 5'-direction to yield nucleoside 5'-phosphates.. Its function is as follows. Bidirectionally degrades single-stranded DNA into large acid-insoluble oligonucleotides, which are then degraded further into small acid-soluble oligonucleotides. This is Exodeoxyribonuclease 7 large subunit from Lactobacillus delbrueckii subsp. bulgaricus (strain ATCC BAA-365 / Lb-18).